A 154-amino-acid chain; its full sequence is Lipoprotein signal peptidase (154 aa).

2 consecutive transmembrane segments (helical) span residues 52–72 (ILAG…IGIV) and 85–105 (LGVA…DRAV). Active-site residues include Asp-111 and Asp-129. A helical transmembrane segment spans residues 124 to 144 (IFNIADSSLCVGVMLLFIQML).

Belongs to the peptidase A8 family.

It is found in the cell membrane. The enzyme catalyses Release of signal peptides from bacterial membrane prolipoproteins. Hydrolyzes -Xaa-Yaa-Zaa-|-(S,diacylglyceryl)Cys-, in which Xaa is hydrophobic (preferably Leu), and Yaa (Ala or Ser) and Zaa (Gly or Ala) have small, neutral side chains.. The protein operates within protein modification; lipoprotein biosynthesis (signal peptide cleavage). In terms of biological role, this protein specifically catalyzes the removal of signal peptides from prolipoproteins. In Bacillus subtilis (strain 168), this protein is Lipoprotein signal peptidase.